Consider the following 153-residue polypeptide: 3-hydroxyacyl-[acyl-carrier-protein] dehydratase FabZ (153 aa).

Residue His-57 is part of the active site.

The protein belongs to the thioester dehydratase family. FabZ subfamily.

Its subcellular location is the cytoplasm. It carries out the reaction a (3R)-hydroxyacyl-[ACP] = a (2E)-enoyl-[ACP] + H2O. Functionally, involved in unsaturated fatty acids biosynthesis. Catalyzes the dehydration of short chain beta-hydroxyacyl-ACPs and long chain saturated and unsaturated beta-hydroxyacyl-ACPs. The sequence is that of 3-hydroxyacyl-[acyl-carrier-protein] dehydratase FabZ from Xanthomonas campestris pv. campestris (strain 8004).